Consider the following 491-residue polypeptide: Probable succinate-semialdehyde dehydrogenase [NADP(+)] (491 aa).

NADP(+) is bound by residues 163–164, 187–190, and 241–242; these read WN, KPAE, and GS. E263 acts as the Proton acceptor in catalysis. L264 serves as a coordination point for NADP(+). The active-site Nucleophile is the C297. Residue E394 coordinates NADP(+).

Belongs to the aldehyde dehydrogenase family.

The catalysed reaction is succinate semialdehyde + NADP(+) + H2O = succinate + NADPH + 2 H(+). The protein operates within amino-acid degradation; 4-aminobutanoate degradation. In terms of biological role, catalyzes the NADP(+) dependent oxidation of succinate semialdehyde to succinate. The polypeptide is Probable succinate-semialdehyde dehydrogenase [NADP(+)] (gabD) (Sinorhizobium fredii (strain NBRC 101917 / NGR234)).